The primary structure comprises 673 residues: DNA ligase (673 aa).

NAD(+) contacts are provided by residues 33–37 (DYEYD), 82–83 (SL), and Glu-113. Residue Lys-115 is the N6-AMP-lysine intermediate of the active site. The NAD(+) site is built by Arg-136, Glu-170, Lys-285, and Lys-309. 4 residues coordinate Zn(2+): Cys-403, Cys-406, Cys-421, and Cys-426. The region spanning 583–672 (AKSDILKGYT…SHEEVEKILM (90 aa)) is the BRCT domain.

Belongs to the NAD-dependent DNA ligase family. LigA subfamily. Mg(2+) serves as cofactor. The cofactor is Mn(2+).

The enzyme catalyses NAD(+) + (deoxyribonucleotide)n-3'-hydroxyl + 5'-phospho-(deoxyribonucleotide)m = (deoxyribonucleotide)n+m + AMP + beta-nicotinamide D-nucleotide.. Functionally, DNA ligase that catalyzes the formation of phosphodiester linkages between 5'-phosphoryl and 3'-hydroxyl groups in double-stranded DNA using NAD as a coenzyme and as the energy source for the reaction. It is essential for DNA replication and repair of damaged DNA. The sequence is that of DNA ligase from Caldicellulosiruptor saccharolyticus (strain ATCC 43494 / DSM 8903 / Tp8T 6331).